Reading from the N-terminus, the 81-residue chain is Large ribosomal subunit protein bL31B (81 aa).

The protein belongs to the bacterial ribosomal protein bL31 family. Type B subfamily. As to quaternary structure, part of the 50S ribosomal subunit.

This chain is Large ribosomal subunit protein bL31B, found in Cutibacterium acnes (strain DSM 16379 / KPA171202) (Propionibacterium acnes).